The chain runs to 477 residues: Putative BTB/POZ domain-containing protein R830 (477 aa).

The BTB domain maps to 13 to 83 (SDLELILVDK…FYGIETNNDP (71 aa)).

Belongs to the mimivirus BTB/WD family.

The sequence is that of Putative BTB/POZ domain-containing protein R830 from Acanthamoeba polyphaga mimivirus (APMV).